The following is a 104-amino-acid chain: Photosystem II reaction center Psb28 protein (104 aa).

The protein belongs to the Psb28 family. In terms of assembly, part of the photosystem II complex.

The protein localises to the cellular thylakoid membrane. The protein is Photosystem II reaction center Psb28 protein of Synechococcus sp. (strain JA-2-3B'a(2-13)) (Cyanobacteria bacterium Yellowstone B-Prime).